Here is an 869-residue protein sequence, read N- to C-terminus: Aminopeptidase N (869 aa).

Residues Glu122 and 262–266 (GAMEN) each bind substrate. His298 is a binding site for Zn(2+). Glu299 serves as the catalytic Proton acceptor. Zn(2+) contacts are provided by His302 and Glu321.

Belongs to the peptidase M1 family. Zn(2+) is required as a cofactor.

Its subcellular location is the cell inner membrane. It carries out the reaction Release of an N-terminal amino acid, Xaa-|-Yaa- from a peptide, amide or arylamide. Xaa is preferably Ala, but may be most amino acids including Pro (slow action). When a terminal hydrophobic residue is followed by a prolyl residue, the two may be released as an intact Xaa-Pro dipeptide.. Its function is as follows. Aminopeptidase N is involved in the degradation of intracellular peptides generated by protein breakdown during normal growth as well as in response to nutrient starvation. The chain is Aminopeptidase N (pepN) from Haemophilus influenzae (strain ATCC 51907 / DSM 11121 / KW20 / Rd).